A 214-amino-acid polypeptide reads, in one-letter code: 3,4-dihydroxy-2-butanone 4-phosphate synthase (214 aa).

Residues 37–38 (RE), aspartate 42, 150–154 (RRGHT), and glutamate 174 each bind D-ribulose 5-phosphate. Glutamate 38 lines the Mg(2+) pocket. Histidine 153 provides a ligand contact to Mg(2+).

Belongs to the DHBP synthase family. In terms of assembly, homodimer. The cofactor is Mg(2+). It depends on Mn(2+) as a cofactor.

It catalyses the reaction D-ribulose 5-phosphate = (2S)-2-hydroxy-3-oxobutyl phosphate + formate + H(+). The protein operates within cofactor biosynthesis; riboflavin biosynthesis; 2-hydroxy-3-oxobutyl phosphate from D-ribulose 5-phosphate: step 1/1. Catalyzes the conversion of D-ribulose 5-phosphate to formate and 3,4-dihydroxy-2-butanone 4-phosphate. The chain is 3,4-dihydroxy-2-butanone 4-phosphate synthase from Nitratidesulfovibrio vulgaris (strain DP4) (Desulfovibrio vulgaris).